Here is a 113-residue protein sequence, read N- to C-terminus: Ribosome-associated factor Y (113 aa).

Residue lysine 66 is modified to N6-acetyllysine. The segment at 91–113 (KGEARRAATSVKDANFVEEVEEE) is disordered.

Belongs to the HPF/YfiA ribosome-associated protein family. YfiA subfamily. As to quaternary structure, associates mainly with 70S ribosomes.

In terms of biological role, during stationary phase, prevents 70S dimer formation, probably in order to regulate translation efficiency during transition between the exponential and the stationary phases. In addition, during environmental stress such as cold shock or excessive cell density at stationary phase, stabilizes the 70S ribosome against dissociation, inhibits translation initiation and increase translation accuracy. When normal growth conditions are restored, is quickly released from the ribosome. This chain is Ribosome-associated factor Y, found in Escherichia coli O157:H7.